Consider the following 85-residue polypeptide: Conotoxin Lt28.5 (85 aa).

The N-terminal stretch at 1-21 (MPKLEMMLLVLLILPLCYIDA) is a signal peptide. Residues 22–40 (VGPPPPWNMEDEIIEHWQK) constitute a propeptide that is removed on maturation.

This sequence belongs to the conotoxin D superfamily. In terms of processing, contains 5 disulfide bonds. As to expression, expressed by the venom duct.

It localises to the secreted. In terms of biological role, probable neurotoxin. In Conus litteratus (Lettered cone), this protein is Conotoxin Lt28.5.